The following is a 201-amino-acid chain: Pyridoxal 5'-phosphate synthase subunit PdxT (201 aa).

An L-glutamine-binding site is contributed by 50 to 52; the sequence is GES. Residue cysteine 82 is the Nucleophile of the active site. L-glutamine is bound by residues arginine 115 and 143-144; that span reads IR. Residues histidine 179 and glutamate 181 each act as charge relay system in the active site.

The protein belongs to the glutaminase PdxT/SNO family. In the presence of PdxS, forms a dodecamer of heterodimers. Only shows activity in the heterodimer.

It carries out the reaction aldehydo-D-ribose 5-phosphate + D-glyceraldehyde 3-phosphate + L-glutamine = pyridoxal 5'-phosphate + L-glutamate + phosphate + 3 H2O + H(+). It catalyses the reaction L-glutamine + H2O = L-glutamate + NH4(+). Its pathway is cofactor biosynthesis; pyridoxal 5'-phosphate biosynthesis. In terms of biological role, catalyzes the hydrolysis of glutamine to glutamate and ammonia as part of the biosynthesis of pyridoxal 5'-phosphate. The resulting ammonia molecule is channeled to the active site of PdxS. This chain is Pyridoxal 5'-phosphate synthase subunit PdxT, found in Deinococcus geothermalis (strain DSM 11300 / CIP 105573 / AG-3a).